We begin with the raw amino-acid sequence, 271 residues long: ABC transporter I family member 10 (271 aa).

An ABC transporter domain is found at 40–267 (VECRNLCFSV…IKAKQSSYID (228 aa)). 77 to 84 (GPNGCGKS) provides a ligand contact to ATP.

The protein belongs to the ABC transporter superfamily. ABCI family.

The chain is ABC transporter I family member 10 (ABCI10) from Arabidopsis thaliana (Mouse-ear cress).